A 722-amino-acid polypeptide reads, in one-letter code: Metal transporter cnnm-5 (722 aa).

The signal sequence occupies residues 1 to 17 (MSLFLFAIFQLALGSPG). Residues 18-139 (APNGPNVPLQ…AAAAKYMGDE (122 aa)) are Extracellular-facing. N-linked (GlcNAc...) asparagine glycans are attached at residues Asn102 and Asn114. In terms of domain architecture, CNNM transmembrane spans 132-318 (AAKYMGDEIV…AQNEREKTIL (187 aa)). A helical membrane pass occupies residues 140 to 160 (IVFCFFCILMSAYASGMTLGY). The Cytoplasmic segment spans residues 161–196 (MKFSMIDLNTMLKIAEGDAAKKRVRRIMHFRRRSTQ). The helical transmembrane segment at 197 to 217 (LVVTFSLFSSVFTVLFTTTCE) threads the bilayer. The Extracellular portion of the chain corresponds to 218-227 (KMLHGVSNED). Residues 228–248 (VLKMAVPALICLIFAEMIPQA) traverse the membrane as a helical segment. At 249-257 (VCNSKFGFN) the chain is on the cytoplasmic side. The chain crosses the membrane as a helical span at residues 258–278 (LAASLWFVTVIIFFVTLPIAY). The Extracellular segment spans residues 279-722 (PASLVLGRFL…ETTPFMEKQE (444 aa)). N-linked (GlcNAc...) asparagine glycosylation is found at Asn320, Asn349, and Asn371. CBS domains lie at 333 to 396 (MVPI…LIDE) and 413 to 473 (TVKF…KIDE). The interval 584-607 (SQRSSSTVNSQQHRQQTTDNSRST) is disordered. Asn639 carries an N-linked (GlcNAc...) asparagine glycan. The disordered stretch occupies residues 686 to 722 (LNSRASTSTSTTPACRTPLSVDARSQDETTPFMEKQE). Residues 688 to 703 (SRASTSTSTTPACRTP) are compositionally biased toward low complexity.

Belongs to the ACDP family.

The protein resides in the cell membrane. Its function is as follows. Probable metal transporter. Probably acts redundantly with the other metal transport proteins cnnm-1, cnnm-2, cnnm-3 and cnnm-4 to regulate Mg(2+) homeostasis. The polypeptide is Metal transporter cnnm-5 (Caenorhabditis elegans).